The following is a 362-amino-acid chain: Patr class I histocompatibility antigen, A-5 alpha chain (362 aa).

A signal peptide spans 1–24 (MQVTAPRTVLLLLSAALALTETWA). An alpha-1 region spans residues 25–114 (GSHSMKYFYT…LRGYYNQSEA (90 aa)). The Extracellular portion of the chain corresponds to 25 to 308 (GSHSMKYFYT…EPSSQSTIPI (284 aa)). An N-linked (GlcNAc...) asparagine glycan is attached at asparagine 110. The tract at residues 115 to 206 (GSHIIQRMYG…ENGKETLQRA (92 aa)) is alpha-2. 2 cysteine pairs are disulfide-bonded: cysteine 125–cysteine 188 and cysteine 227–cysteine 283. The alpha-3 stretch occupies residues 207–298 (DPPKTHVTHH…GLPKPLTLRW (92 aa)). In terms of domain architecture, Ig-like C1-type spans 209 to 295 (PKTHVTHHPI…QHEGLPKPLT (87 aa)). Positions 299 to 308 (EPSSQSTIPI) are connecting peptide. A helical membrane pass occupies residues 309–332 (VGIVAGLAVLAVVVIGAVVAAVMC). The Cytoplasmic portion of the chain corresponds to 333 to 362 (RRKSSGGKGGSYSQAASSDSAQGSDVSLTA). The disordered stretch occupies residues 336-362 (SSGGKGGSYSQAASSDSAQGSDVSLTA). Serine 343 bears the Phosphoserine mark. Residues 343-362 (SYSQAASSDSAQGSDVSLTA) are compositionally biased toward low complexity. At tyrosine 344 the chain carries Phosphotyrosine. Phosphoserine occurs at positions 345, 349, 350, 352, 356, and 359.

The protein belongs to the MHC class I family. In terms of assembly, heterodimer of an alpha chain and a beta chain (beta-2-microglobulin).

The protein resides in the membrane. Involved in the presentation of foreign antigens to the immune system. The polypeptide is Patr class I histocompatibility antigen, A-5 alpha chain (Pan troglodytes (Chimpanzee)).